Consider the following 299-residue polypeptide: ATP phosphoribosyltransferase (299 aa).

Belongs to the ATP phosphoribosyltransferase family. Long subfamily. As to quaternary structure, equilibrium between an active dimeric form, an inactive hexameric form and higher aggregates. Interconversion between the various forms is largely reversible and is influenced by the natural substrates and inhibitors of the enzyme. It depends on Mg(2+) as a cofactor.

The protein resides in the cytoplasm. The enzyme catalyses 1-(5-phospho-beta-D-ribosyl)-ATP + diphosphate = 5-phospho-alpha-D-ribose 1-diphosphate + ATP. It functions in the pathway amino-acid biosynthesis; L-histidine biosynthesis; L-histidine from 5-phospho-alpha-D-ribose 1-diphosphate: step 1/9. Its activity is regulated as follows. Feedback inhibited by histidine. Functionally, catalyzes the condensation of ATP and 5-phosphoribose 1-diphosphate to form N'-(5'-phosphoribosyl)-ATP (PR-ATP). Has a crucial role in the pathway because the rate of histidine biosynthesis seems to be controlled primarily by regulation of HisG enzymatic activity. In Enterobacter sp. (strain 638), this protein is ATP phosphoribosyltransferase.